Consider the following 179-residue polypeptide: Large ribosomal subunit protein uL5 (179 aa).

This sequence belongs to the universal ribosomal protein uL5 family. In terms of assembly, part of the 50S ribosomal subunit; part of the 5S rRNA/L5/L18/L25 subcomplex. Contacts the 5S rRNA and the P site tRNA. Forms a bridge to the 30S subunit in the 70S ribosome.

This is one of the proteins that bind and probably mediate the attachment of the 5S RNA into the large ribosomal subunit, where it forms part of the central protuberance. In the 70S ribosome it contacts protein S13 of the 30S subunit (bridge B1b), connecting the 2 subunits; this bridge is implicated in subunit movement. Contacts the P site tRNA; the 5S rRNA and some of its associated proteins might help stabilize positioning of ribosome-bound tRNAs. This Paramagnetospirillum magneticum (strain ATCC 700264 / AMB-1) (Magnetospirillum magneticum) protein is Large ribosomal subunit protein uL5.